A 255-amino-acid chain; its full sequence is 4-hydroxy-tetrahydrodipicolinate reductase (255 aa).

Residues Gly9–Met14, Asp35, Gly89–Thr91, and Ala115–Phe118 contribute to the NAD(+) site. Residue His145 is the Proton donor/acceptor of the active site. (S)-2,3,4,5-tetrahydrodipicolinate is bound at residue His146. Residue Lys149 is the Proton donor of the active site. Position 155–156 (Gly155–Thr156) interacts with (S)-2,3,4,5-tetrahydrodipicolinate.

This sequence belongs to the DapB family.

It is found in the cytoplasm. It carries out the reaction (S)-2,3,4,5-tetrahydrodipicolinate + NAD(+) + H2O = (2S,4S)-4-hydroxy-2,3,4,5-tetrahydrodipicolinate + NADH + H(+). The catalysed reaction is (S)-2,3,4,5-tetrahydrodipicolinate + NADP(+) + H2O = (2S,4S)-4-hydroxy-2,3,4,5-tetrahydrodipicolinate + NADPH + H(+). It functions in the pathway amino-acid biosynthesis; L-lysine biosynthesis via DAP pathway; (S)-tetrahydrodipicolinate from L-aspartate: step 4/4. In terms of biological role, catalyzes the conversion of 4-hydroxy-tetrahydrodipicolinate (HTPA) to tetrahydrodipicolinate. The sequence is that of 4-hydroxy-tetrahydrodipicolinate reductase from Streptococcus pneumoniae (strain 70585).